The primary structure comprises 271 residues: Tryptophan synthase alpha chain (271 aa).

Catalysis depends on proton acceptor residues Glu51 and Asp62.

This sequence belongs to the TrpA family. As to quaternary structure, tetramer of two alpha and two beta chains.

The catalysed reaction is (1S,2R)-1-C-(indol-3-yl)glycerol 3-phosphate + L-serine = D-glyceraldehyde 3-phosphate + L-tryptophan + H2O. It functions in the pathway amino-acid biosynthesis; L-tryptophan biosynthesis; L-tryptophan from chorismate: step 5/5. In terms of biological role, the alpha subunit is responsible for the aldol cleavage of indoleglycerol phosphate to indole and glyceraldehyde 3-phosphate. The protein is Tryptophan synthase alpha chain of Prochlorococcus marinus (strain NATL2A).